Reading from the N-terminus, the 81-residue chain is Large ribosomal subunit protein bL27 (81 aa).

The span at 1-11 shows a compositional bias: polar residues; sequence MATSKSGGSSK. A disordered region spans residues 1 to 20; the sequence is MATSKSGGSSKNGRDSISKR.

The protein belongs to the bacterial ribosomal protein bL27 family.

The chain is Large ribosomal subunit protein bL27 from Borreliella afzelii (strain PKo) (Borrelia afzelii).